The chain runs to 322 residues: Ribosomal RNA small subunit methyltransferase H (322 aa).

S-adenosyl-L-methionine is bound by residues 47–49, D67, F93, D112, and Q119; that span reads GGH.

The protein belongs to the methyltransferase superfamily. RsmH family.

Its subcellular location is the cytoplasm. It catalyses the reaction cytidine(1402) in 16S rRNA + S-adenosyl-L-methionine = N(4)-methylcytidine(1402) in 16S rRNA + S-adenosyl-L-homocysteine + H(+). Specifically methylates the N4 position of cytidine in position 1402 (C1402) of 16S rRNA. The sequence is that of Ribosomal RNA small subunit methyltransferase H from Stenotrophomonas maltophilia (strain R551-3).